A 41-amino-acid polypeptide reads, in one-letter code: Photosystem I reaction center subunit IX (41 aa).

Residues 7–27 (YLSTAPVLATLWFGLLAGILI) form a helical membrane-spanning segment.

It belongs to the PsaJ family.

The protein resides in the plastid. The protein localises to the chloroplast thylakoid membrane. May help in the organization of the PsaE and PsaF subunits. The sequence is that of Photosystem I reaction center subunit IX from Chara vulgaris (Common stonewort).